The following is a 727-amino-acid chain: Protein edg-1 (727 aa).

The interval 703-727 (FAESSVKPTTSSAYGNSSNFSRYAD) is disordered.

As to quaternary structure, may interact with deps-1 and prg-1.

The protein localises to the cytoplasmic granule. Plays a role in regulating deps-1 cluster formation in the germline. The sequence is that of Protein edg-1 from Caenorhabditis elegans.